We begin with the raw amino-acid sequence, 2963 residues long: tRNA nuclease CdiA (2963 aa).

A signal peptide spans methionine 1–alanine 29. The segment at alanine 35 to histidine 320 is two-partner system transport domain (TPS). The interval glycine 573–asparagine 1074 is FHA-1. Positions arginine 1075 to aspartate 1342 are receptor binding domain (RBD). The segment at tyrosine 1343 to glutamine 1528 is YP domain. The segment at glycine 1529–asparagine 1751 is periplasmic FHA-1 repeat (pFR). The segment covering threonine 1759–threonine 1770 has biased composition (basic and acidic residues). Disordered stretches follow at residues threonine 1759–serine 1787 and serine 1992–alanine 2012. An FHA-2 region spans residues glutamine 1762–lysine 2314. The segment covering threonine 1771–glycine 1782 has biased composition (polar residues). The VEDN CT cleavage motif signature appears at valine 2694–asparagine 2697. The C-terminal effector domain (CT) stretch occupies residues valine 2694 to asparagine 2963.

In the N-terminal section; belongs to the CdiA toxin family. This sequence in the C-terminal section; belongs to the bacterial EndoU family. In terms of assembly, forms a 1:1 complex with cognate immunity protein CdiI.

It is found in the secreted. The protein localises to the target cell. It localises to the target cell cytoplasm. Toxic component of a toxin-immunity protein module, which functions as a cellular contact-dependent growth inhibition (CDI) system. CDI modules allow bacteria to communicate with and inhibit the growth of closely related neighboring bacteria in a contact-dependent fashion. Targeting of the CT domain (residues 2824-2963) in the absence of immunity protein inhibits cell growth and causes tRNA(UUC-Glu) cleavage in the anticodon loop; expression of cognate immunity protein CdiI-43969 neutralizes growth inhibition and tRNA(UUC-Glu) remains intact, whereas non-cognate immunity proteins do not confer protection from the toxic effects. Functionally, the CdiA protein is thought to be exported from the cell through the central lumen of CdiB, the other half of its two-partner system (TPS). The TPS domain probably remains associated with CdiB while the FHA-1 domain forms an extended filament with the receptor-binding domain (RBD) at its extremity; in the secretion arrested state the C-terminus of the RBD and YP domains form a hairpin-like structure as the FHA-2, PT and CT domains are periplasmic. The YP domain is probably responsible for this arrest at the point where it re-enters the host cell periplasm. Upon binding to a target cell outer membrane receptor a signal is transmitted to activate secretion. The filament elongates slightly, the rest of CdiA is secreted and the FHA-2 domain becomes stably associated with the target cell's outer membrane where it facilitates entry of the toxic CT domain into the target cell periplasm. From there the toxic CT domain is cleaved and gains access to the target cell cytoplasm via an inner membrane protein. The protein is tRNA nuclease CdiA of Yersinia mollaretii (strain ATCC 43969 / DSM 18520 / CIP 103324 / CNY 7263 / WAIP 204).